Consider the following 514-residue polypeptide: MADSQPLSGAPEGAEYLRAVLRAPVYEAAQVTPLQKMEKLSSRLDNVILVKREDRQPVHSFKLRGAYAMMAGLTEEQKAHGVITASAGNHAQGVAFSSARLGVKALIVMPTATADIKVDAVRGFGGEVLLHGANFDEAKAKAIELSQQQGFTWVPPFDHPMVIAGQGTLALELLQQDAHLDRVFVPVGGGGLAAGVAVLIKQLMPQIKVIAVEAEDSACLKAALDAGHPVDLPRVGLFAEGVAVKRIGDETFRLCQEYLDDIITVDSDAICAAMKDLFEDVRAVAEPSGALALAGMKKYIALHNIRGERLAHILSGANVNFHGLRYVSERCELGEQREALLAVTIPEEKGSFLKFCQLLGGRSVTEFNYRFADAKNACIFVGVRLSRGLEERKEILQMLNDGGYSVVDLSDDEMAKLHVRYMVGGRPSHPLQERLYSFEFPESPGALLRFLNTLGTYWNISLFHYRSHGTDYGRVLAAFELGDHEPDFETRLNELGYDCHDETNNPAFRFFLAG.

An N6-(pyridoxal phosphate)lysine modification is found at Lys62. Residues Asn89, 188 to 192, and Ser315 contribute to the pyridoxal 5'-phosphate site; that span reads GGGGL. 2 ACT-like domains span residues 339–411 and 434–504; these read ALLA…DLSD and RLYS…DETN.

This sequence belongs to the serine/threonine dehydratase family. In terms of assembly, homotetramer. Pyridoxal 5'-phosphate is required as a cofactor.

The enzyme catalyses L-threonine = 2-oxobutanoate + NH4(+). It participates in amino-acid biosynthesis; L-isoleucine biosynthesis; 2-oxobutanoate from L-threonine: step 1/1. Isoleucine allosterically inhibits whereas valine allosterically activates this enzyme. Catalyzes the anaerobic formation of alpha-ketobutyrate and ammonia from threonine in a two-step reaction. The first step involved a dehydration of threonine and a production of enamine intermediates (aminocrotonate), which tautomerizes to its imine form (iminobutyrate). Both intermediates are unstable and short-lived. The second step is the nonenzymatic hydrolysis of the enamine/imine intermediates to form 2-ketobutyrate and free ammonia. In the low water environment of the cell, the second step is accelerated by RidA. This is L-threonine dehydratase biosynthetic IlvA (ilvA) from Escherichia coli (strain K12).